The primary structure comprises 642 residues: Threonine--tRNA ligase (642 aa).

Residues 1–61 form the TGS domain; that stretch reads MPVITLPDGS…DTDAQLAIIT (61 aa). Positions 243-534 are catalytic; sequence DHRKIGKQLD…LTEEFAGFFP (292 aa). Zn(2+) is bound by residues Cys-334, His-385, and His-511.

Belongs to the class-II aminoacyl-tRNA synthetase family. In terms of assembly, homodimer. Requires Zn(2+) as cofactor.

The protein resides in the cytoplasm. The enzyme catalyses tRNA(Thr) + L-threonine + ATP = L-threonyl-tRNA(Thr) + AMP + diphosphate + H(+). Its function is as follows. Catalyzes the attachment of threonine to tRNA(Thr) in a two-step reaction: L-threonine is first activated by ATP to form Thr-AMP and then transferred to the acceptor end of tRNA(Thr). Also edits incorrectly charged L-seryl-tRNA(Thr). This Pectobacterium atrosepticum (strain SCRI 1043 / ATCC BAA-672) (Erwinia carotovora subsp. atroseptica) protein is Threonine--tRNA ligase.